The following is a 570-amino-acid chain: MKASQFFISTLKEAPAEAALASHKLMIRAGLIKANASGLYTWMPMGLRVLRKVENVVREEMARAGSVELLMPVVQPAELWQESGRWEFYGKELLRLKDRHDRDFCMGPTCEEVIADIVRKEINSYKQLPKNFYHIQTKFRDEVRPRFGVMRAREFVMKDAYSFHADYASLQTTYDAMYDAYCRIFTRLGLEFRPVAADTGSIGGTGSHEFQVLAESGEDVIAYSDTSDYAANVELAPTLPLKGERTAAQAELVKVHTPNVKTIESLVEFLNIPVEQTLKSIVVEGENEGEIVLLLLRGDHEFNDIKAEKLAGVKSPLTMASPAAIVEQFGANGGSLGPVGFAGKVYADFATEKGADWVIGANEDGYHYTGFNFGRDAAEPEFVDLRNVVEGDESPDGQGRLKLARGIEVGHVFQLRDKYTQAMNVSFLDNNGKSQIMEMGCYGIGITRVVAAAIEQNNDEKGIIWTKAMASFEVVIVPMNYKKSDTVREAADKIYAELLAAGADVLLDDRDERAGVLLNDSELLGIPHRIVIGDRALKEGNVEYAERRDNEAQAIAIGEIVARVTASLNA.

It belongs to the class-II aminoacyl-tRNA synthetase family. ProS type 1 subfamily. As to quaternary structure, homodimer.

The protein resides in the cytoplasm. It carries out the reaction tRNA(Pro) + L-proline + ATP = L-prolyl-tRNA(Pro) + AMP + diphosphate. Functionally, catalyzes the attachment of proline to tRNA(Pro) in a two-step reaction: proline is first activated by ATP to form Pro-AMP and then transferred to the acceptor end of tRNA(Pro). As ProRS can inadvertently accommodate and process non-cognate amino acids such as alanine and cysteine, to avoid such errors it has two additional distinct editing activities against alanine. One activity is designated as 'pretransfer' editing and involves the tRNA(Pro)-independent hydrolysis of activated Ala-AMP. The other activity is designated 'posttransfer' editing and involves deacylation of mischarged Ala-tRNA(Pro). The misacylated Cys-tRNA(Pro) is not edited by ProRS. The sequence is that of Proline--tRNA ligase from Neisseria meningitidis serogroup A / serotype 4A (strain DSM 15465 / Z2491).